The chain runs to 239 residues: MVIKAQSPAGFAEEYIIESIWNNRFPPGTILPAERELSELIGVTRTTLREVLQRLARDGWLTIQHGKPTKVNNFWETSGLNILETLARLDHESVPQLIDNLLSVRTNISTIFIRTAFRQHPDKAQEVLATANEVADHADAFAELDYNIFRGLAFASGNPIYGLILNGMKGLYTRIGRHYFANPEARSLALGFYHKLSALCSEGAHDQVYETVRRYGHESGEIWHRMQKNLPGDLAIQGR.

The region spanning 6–74 (QSPAGFAEEY…HGKPTKVNNF (69 aa)) is the HTH gntR-type domain. A DNA-binding region (H-T-H motif) is located at residues 34–53 (ERELSELIGVTRTTLREVLQ).

Homodimer.

The protein localises to the cytoplasm. Multifunctional regulator of fatty acid metabolism. The chain is Fatty acid metabolism regulator protein from Shigella flexneri.